The chain runs to 306 residues: Nucleotide-binding protein MUL_1815 (306 aa).

Position 29 to 36 (29 to 36 (GLSGAGRG)) interacts with ATP. 80-83 (DVRS) is a GTP binding site.

Belongs to the RapZ-like family.

In terms of biological role, displays ATPase and GTPase activities. In Mycobacterium ulcerans (strain Agy99), this protein is Nucleotide-binding protein MUL_1815.